A 566-amino-acid chain; its full sequence is Alpha-N-acetylgalactosaminide alpha-2,6-sialyltransferase 1 (566 aa).

Residues 1-16 (MGFLIRRLPKDSRIFR) lie on the Cytoplasmic side of the membrane. A helical; Signal-anchor for type II membrane protein membrane pass occupies residues 17-37 (WLLILTVFSFIITSFSALFGM). Over 38–566 (EKSIFRQLKI…ENIMKLYQRS (529 aa)) the chain is Lumenal. Residues asparagine 66 and asparagine 132 are each glycosylated (N-linked (GlcNAc...) asparagine). Residues 138–161 (ASVVERTKEKTTARPVPGVGEADG) form a disordered region. Asparagine 192 is a glycosylation site (N-linked (GlcNAc...) asparagine). Repeat unit 1 spans residues 247–254 (SSSPVSTC). The interval 247–337 (SSSPVSTCSE…ANSSSNVSTC (91 aa)) is 2 X 8 AA repeats of S-S-S-X-V-S-T-C. 2 cysteine pairs are disulfide-bonded: cysteine 254–cysteine 337 and cysteine 340–cysteine 508. 5 N-linked (GlcNAc...) asparagine glycosylation sites follow: asparagine 275, asparagine 286, asparagine 306, asparagine 329, and asparagine 333. Repeat 2 spans residues 330 to 337 (SSSNVSTC).

Belongs to the glycosyltransferase 29 family. As to expression, heart, kidney, testes, brain, liver and lung.

It localises to the golgi apparatus membrane. It carries out the reaction a beta-D-galactosyl-(1-&gt;3)-N-acetyl-alpha-D-galactosaminyl derivative + CMP-N-acetyl-beta-neuraminate = a beta-D-galactosyl-(1-&gt;3)-[N-acetyl-alpha-neuraminyl-(2-&gt;6)]-N-acetyl-alpha-D-galactosaminyl derivative + CMP + H(+). It catalyses the reaction a 3-O-[N-acetyl-alpha-D-galactosaminyl]-L-seryl-[protein] + CMP-N-acetyl-beta-neuraminate = a 3-O-[N-acetyl-alpha-neuraminosyl-(2-&gt;6)-N-acetyl-alpha-D-galactosaminyl]-L-seryl-[protein] + CMP + H(+). The enzyme catalyses a 3-O-[N-acetyl-alpha-D-galactosaminyl]-L-threonyl-[protein] + CMP-N-acetyl-beta-neuraminate = a 3-O-[N-acetyl-alpha-neuraminosyl-(2-&gt;6)-N-acetyl-alpha-D-galactosaminyl]-L-threonyl-[protein] + CMP + H(+). The catalysed reaction is a 3-O-[beta-D-galactosyl-(1-&gt;3)-N-acetyl-alpha-D-galactosaminyl]-L-seryl-[protein] + CMP-N-acetyl-beta-neuraminate = a 3-O-{beta-D-galactosyl-(1-&gt;3)-[N-acetyl-alpha-neuraminosyl-(2-&gt;6)]-N-acetyl-alpha-D-galactosaminyl}-L-seryl-[protein] + CMP + H(+). It carries out the reaction a 3-O-[beta-D-galactosyl-(1-&gt;3)-N-acetyl-alpha-D-galactosaminyl]-L-threonyl-[protein] + CMP-N-acetyl-beta-neuraminate = a 3-O-{beta-D-galactosyl-(1-&gt;3)-[N-acetyl-alpha-neuraminosyl-(2-&gt;6)]-N-acetyl-alpha-D-galactosaminyl}-L-threonyl-[protein] + CMP + H(+). It catalyses the reaction a 3-O-[N-acetyl-alpha-neuraminyl-(2-&gt;3)-beta-D-galactosyl-(1-&gt;3)-N-acetyl-alpha-D-galactosaminyl]-L-threonyl-[protein] + CMP-N-acetyl-beta-neuraminate = a 3-O-{alpha-Neu5Ac-(2-&gt;3)-beta-D-Gal-(1-&gt;3)-[alpha-Neu5Ac-(2-&gt;6)]-alpha-D-GalNAc}-L-threonyl-[protein] + CMP + H(+). The protein operates within protein modification; protein glycosylation. Its function is as follows. Protein sialyltransferase specifically expressed in goblet cells that plays a key role in intestinal host-commensal homeostasis. Conjugates sialic acid with an alpha-2-6 linkage to N-acetylgalactosamine (GalNAc) glycan chains linked to serine or threonine in glycoproteins. Generates sialylated T and Tn antigens.. The protein is Alpha-N-acetylgalactosaminide alpha-2,6-sialyltransferase 1 (ST6GALNAC1) of Gallus gallus (Chicken).